The following is a 260-amino-acid chain: Acetylglutamate kinase (260 aa).

Residues 45 to 46 (GG), Arg67, and Asn159 each bind substrate.

The protein belongs to the acetylglutamate kinase family. ArgB subfamily.

It is found in the cytoplasm. The enzyme catalyses N-acetyl-L-glutamate + ATP = N-acetyl-L-glutamyl 5-phosphate + ADP. The protein operates within amino-acid biosynthesis; L-arginine biosynthesis; N(2)-acetyl-L-ornithine from L-glutamate: step 2/4. Catalyzes the ATP-dependent phosphorylation of N-acetyl-L-glutamate. This Aliivibrio fischeri (strain ATCC 700601 / ES114) (Vibrio fischeri) protein is Acetylglutamate kinase.